A 248-amino-acid chain; its full sequence is Ribosomal RNA small subunit methyltransferase J (248 aa).

Residues 98 to 99 (RD), 114 to 115 (ER), 150 to 151 (SS), and Asp168 contribute to the S-adenosyl-L-methionine site.

The protein belongs to the methyltransferase superfamily. RsmJ family.

It is found in the cytoplasm. The enzyme catalyses guanosine(1516) in 16S rRNA + S-adenosyl-L-methionine = N(2)-methylguanosine(1516) in 16S rRNA + S-adenosyl-L-homocysteine + H(+). Its function is as follows. Specifically methylates the guanosine in position 1516 of 16S rRNA. In Shewanella baltica (strain OS185), this protein is Ribosomal RNA small subunit methyltransferase J.